A 390-amino-acid chain; its full sequence is Galactokinase (390 aa).

A substrate-binding site is contributed by 33 to 36 (EHTD). ATP contacts are provided by residues Ser67 and 124-130 (GAGLSSS). Mg(2+) is bound by residues Ser130 and Glu162. Catalysis depends on Asp174, which acts as the Proton acceptor. Tyr224 lines the substrate pocket.

Belongs to the GHMP kinase family. GalK subfamily.

The protein localises to the cytoplasm. The catalysed reaction is alpha-D-galactose + ATP = alpha-D-galactose 1-phosphate + ADP + H(+). It participates in carbohydrate metabolism; galactose metabolism. Its function is as follows. Catalyzes the transfer of the gamma-phosphate of ATP to D-galactose to form alpha-D-galactose-1-phosphate (Gal-1-P). The sequence is that of Galactokinase from Bacillus subtilis (strain 168).